The chain runs to 179 residues: GTP-dependent dephospho-CoA kinase (179 aa).

5 residues coordinate GTP: Asp43, Val45, Asp62, Glu120, and Asp143.

Belongs to the GTP-dependent DPCK family.

It catalyses the reaction 3'-dephospho-CoA + GTP = GDP + CoA + H(+). It functions in the pathway cofactor biosynthesis; coenzyme A biosynthesis. Catalyzes the GTP-dependent phosphorylation of the 3'-hydroxyl group of dephosphocoenzyme A to form coenzyme A (CoA). This chain is GTP-dependent dephospho-CoA kinase, found in Haloarcula marismortui (strain ATCC 43049 / DSM 3752 / JCM 8966 / VKM B-1809) (Halobacterium marismortui).